Here is a 400-residue protein sequence, read N- to C-terminus: 3-phenylpropionate/cinnamic acid dioxygenase ferredoxin--NAD(+) reductase component (400 aa).

An FAD-binding site is contributed by 5 to 36 (TIIIVGGGQAAAMAAASLRQQGFTGELHLFSD). An NAD(+)-binding site is contributed by 146 to 174 (SVVIVGAGTIGLELAASATQRGCKATVIE).

It belongs to the bacterial ring-hydroxylating dioxygenase ferredoxin reductase family. In terms of assembly, this dioxygenase system consists of four proteins: the two subunits of the hydroxylase component (HcaE and HcaF), a ferredoxin (HcaC) and a ferredoxin reductase (HcaD). FAD serves as cofactor.

It catalyses the reaction 2 reduced [2Fe-2S]-[ferredoxin] + NAD(+) + H(+) = 2 oxidized [2Fe-2S]-[ferredoxin] + NADH. It functions in the pathway aromatic compound metabolism; 3-phenylpropanoate degradation. Part of the multicomponent 3-phenylpropionate dioxygenase, that converts 3-phenylpropionic acid (PP) and cinnamic acid (CI) into 3-phenylpropionate-dihydrodiol (PP-dihydrodiol) and cinnamic acid-dihydrodiol (CI-dihydrodiol), respectively. The sequence is that of 3-phenylpropionate/cinnamic acid dioxygenase ferredoxin--NAD(+) reductase component from Escherichia coli O7:K1 (strain IAI39 / ExPEC).